A 407-amino-acid chain; its full sequence is Protoasukamycin 4-monooxygenase (407 aa).

In terms of assembly, does not interact with AsuE2, suggesting a possible transient interaction between the two enzymes instead of formation of a stable complex. FMN serves as cofactor. It depends on FAD as a cofactor. Riboflavin is required as a cofactor.

It catalyses the reaction protoasukamycin + NADH + O2 + H(+) = 4-hydroxyprotoasukamycin + NAD(+) + H2O. It functions in the pathway antibiotic biosynthesis. With respect to regulation, when flavin concentration is low, activity is enhanced by the presence of the NADH-dependent flavin reductase AsuE2. In the presence of abundant flavin, activity of AsuE1 is not affected by AsuE2. Functionally, involved in the biosynthesis of the antibiotic asukamycin. Catalyzes the conversion of protoasukamycin to 4-hydroxyprotoasukamycin. Can also convert some protoasukamycin derivatives into their corresponding 4-hydroxyprotoasukamycin derivatives. Can also use NADPH, but catalytic efficiency is 50-fold higher with NADH. This is Protoasukamycin 4-monooxygenase from Streptomyces nodosus subsp. asukaensis.